Consider the following 479-residue polypeptide: tRNA-2-methylthio-N(6)-dimethylallyladenosine synthase (479 aa).

The 117-residue stretch at 6-122 folds into the MTTase N-terminal domain; that stretch reads KTVYIKTVGC…IPDMLTKVTS (117 aa). 6 residues coordinate [4Fe-4S] cluster: C15, C51, C85, C172, C176, and C179. The 233-residue stretch at 158 to 390 folds into the Radical SAM core domain; that stretch reads RPTPFQAYLR…LAVQDRISKE (233 aa). Positions 393–464 constitute a TRAM domain; sequence QKLIGDTVEV…SHTLIGRVKT (72 aa).

Belongs to the methylthiotransferase family. MiaB subfamily. As to quaternary structure, monomer. The cofactor is [4Fe-4S] cluster.

The protein localises to the cytoplasm. The enzyme catalyses N(6)-dimethylallyladenosine(37) in tRNA + (sulfur carrier)-SH + AH2 + 2 S-adenosyl-L-methionine = 2-methylsulfanyl-N(6)-dimethylallyladenosine(37) in tRNA + (sulfur carrier)-H + 5'-deoxyadenosine + L-methionine + A + S-adenosyl-L-homocysteine + 2 H(+). In terms of biological role, catalyzes the methylthiolation of N6-(dimethylallyl)adenosine (i(6)A), leading to the formation of 2-methylthio-N6-(dimethylallyl)adenosine (ms(2)i(6)A) at position 37 in tRNAs that read codons beginning with uridine. This Rhodopirellula baltica (strain DSM 10527 / NCIMB 13988 / SH1) protein is tRNA-2-methylthio-N(6)-dimethylallyladenosine synthase.